We begin with the raw amino-acid sequence, 133 residues long: Small ribosomal subunit protein uS8 (133 aa).

The protein belongs to the universal ribosomal protein uS8 family. In terms of assembly, part of the 30S ribosomal subunit. Contacts proteins S5 and S12.

One of the primary rRNA binding proteins, it binds directly to 16S rRNA central domain where it helps coordinate assembly of the platform of the 30S subunit. The sequence is that of Small ribosomal subunit protein uS8 from Orientia tsutsugamushi (strain Ikeda) (Rickettsia tsutsugamushi).